Consider the following 111-residue polypeptide: Repressed By RIM101 protein 1 (111 aa).

Positions 1-19 are cleaved as a signal peptide; that stretch reads MKFSTTLLALTASIAAVMS. Positions 71–90 are disordered; that stretch reads SGASSATGGSSAAKSGSSSG. Residue Ser-81 is the site of GPI-anchor amidated serine attachment. The propeptide at 82–111 is removed in mature form; sequence AAKSGSSSGAGFAPVAGAGSLAAIAGLLLL.

In terms of processing, the GPI-anchor is attached to the protein in the endoplasmic reticulum and serves to target the protein to the cell surface. There, the glucosamine-inositol phospholipid moiety is cleaved off and the GPI-modified mannoprotein is covalently attached via its lipidless GPI glycan remnant to the 1,6-beta-glucan of the outer cell wall layer.

It is found in the secreted. The protein resides in the cell wall. Its subcellular location is the membrane. In terms of biological role, probable cell wall protein required for filamentation at low pH. The polypeptide is Repressed By RIM101 protein 1 (RBR1) (Candida albicans (strain SC5314 / ATCC MYA-2876) (Yeast)).